Reading from the N-terminus, the 543-residue chain is Protein P78/83 (543 aa).

Disordered regions lie at residues 147–222 (QALP…QPAA), 235–325 (RNEK…SLSN), and 373–400 (MAKS…ANTP). Positions 182 to 221 (AAPPPPPSPVPNIPAPPPPPPPSMSELPPAPPMPTEPQPA) are enriched in pro residues. Residues 226–246 (DRQQLLEAIRNEKNRTRLRPV) enclose the WH2 domain. Residues 271–321 (PKPPSASPPPPPPPPPPPAPPAPPPMVDLSSAPPPPPLVDLPSEMLPPPAP) show a composition bias toward pro residues. The span at 375–384 (KSSSEATSND) shows a compositional bias: polar residues.

As to quaternary structure, forms a complex with proteins C42 and E27. Interacts with host actin-related protein 2/3 complex. Interacts with protein Ac102.

It is found in the host cytoplasm. Its subcellular location is the host nucleus. Its function is as follows. Plays a role in the transport of the nucleocapsids from the cytoplasm toward the host nucleus together with the host actin-polymerizing Arp2/3 complex. The polypeptide is Protein P78/83 (P61) (Lepidoptera (butterflies and moths)).